The chain runs to 402 residues: Phosphoglycerate kinase (402 aa).

Substrate contacts are provided by residues 24-26, R40, 63-66, R122, and R155; these read DFN and HFGR. Residues K206, G297, E328, and 357 to 360 each bind ATP; that span reads GGDS.

This sequence belongs to the phosphoglycerate kinase family. In terms of assembly, monomer.

The protein resides in the cytoplasm. It catalyses the reaction (2R)-3-phosphoglycerate + ATP = (2R)-3-phospho-glyceroyl phosphate + ADP. Its pathway is carbohydrate degradation; glycolysis; pyruvate from D-glyceraldehyde 3-phosphate: step 2/5. This Synechococcus sp. (strain CC9311) protein is Phosphoglycerate kinase.